A 691-amino-acid chain; its full sequence is ATP-dependent RNA helicase MRH4, mitochondrial (691 aa).

Residues M1–A31 constitute a mitochondrion transit peptide. Positions A31–R148 are disordered. A compositionally biased stretch (polar residues) spans Q39–R49. Residues Q50–R68 are compositionally biased toward basic and acidic residues. Over residues S94–S103 the composition is skewed to low complexity. Residues V111–T126 are compositionally biased toward polar residues. The short motif at R183 to T213 is the Q motif element. The 209-residue stretch at A225–E433 folds into the Helicase ATP-binding domain. A238 to T245 provides a ligand contact to ATP. Positions D382–D385 match the DEAD box motif. The 218-residue stretch at T474–T691 folds into the Helicase C-terminal domain. A disordered region spans residues L644–A667.

This sequence belongs to the DEAD box helicase family. MRH4 subfamily.

The protein resides in the mitochondrion. It catalyses the reaction ATP + H2O = ADP + phosphate + H(+). In terms of biological role, ATP-binding RNA helicase involved in mitochondrial RNA metabolism. Required for maintenance of mitochondrial DNA. This Cryptococcus neoformans var. neoformans serotype D (strain JEC21 / ATCC MYA-565) (Filobasidiella neoformans) protein is ATP-dependent RNA helicase MRH4, mitochondrial (MRH4).